A 432-amino-acid chain; its full sequence is Trigger factor (432 aa).

The PPIase FKBP-type domain occupies 161–246 (EDRVTIDFTG…LKKVEERELP (86 aa)).

This sequence belongs to the FKBP-type PPIase family. Tig subfamily.

It localises to the cytoplasm. The enzyme catalyses [protein]-peptidylproline (omega=180) = [protein]-peptidylproline (omega=0). Its function is as follows. Involved in protein export. Acts as a chaperone by maintaining the newly synthesized protein in an open conformation. Functions as a peptidyl-prolyl cis-trans isomerase. In Salmonella schwarzengrund (strain CVM19633), this protein is Trigger factor.